The sequence spans 115 residues: Large ribosomal subunit protein bL19 (115 aa).

The protein belongs to the bacterial ribosomal protein bL19 family.

This protein is located at the 30S-50S ribosomal subunit interface and may play a role in the structure and function of the aminoacyl-tRNA binding site. The polypeptide is Large ribosomal subunit protein bL19 (Nitrosococcus oceani (strain ATCC 19707 / BCRC 17464 / JCM 30415 / NCIMB 11848 / C-107)).